A 593-amino-acid chain; its full sequence is Proline--tRNA ligase (593 aa).

The protein belongs to the class-II aminoacyl-tRNA synthetase family. ProS type 1 subfamily. As to quaternary structure, homodimer.

The protein localises to the cytoplasm. The catalysed reaction is tRNA(Pro) + L-proline + ATP = L-prolyl-tRNA(Pro) + AMP + diphosphate. Catalyzes the attachment of proline to tRNA(Pro) in a two-step reaction: proline is first activated by ATP to form Pro-AMP and then transferred to the acceptor end of tRNA(Pro). As ProRS can inadvertently accommodate and process non-cognate amino acids such as alanine and cysteine, to avoid such errors it has two additional distinct editing activities against alanine. One activity is designated as 'pretransfer' editing and involves the tRNA(Pro)-independent hydrolysis of activated Ala-AMP. The other activity is designated 'posttransfer' editing and involves deacylation of mischarged Ala-tRNA(Pro). The misacylated Cys-tRNA(Pro) is not edited by ProRS. The chain is Proline--tRNA ligase from Synechococcus sp. (strain CC9902).